We begin with the raw amino-acid sequence, 157 residues long: Transcription elongation factor GreB (157 aa).

This sequence belongs to the GreA/GreB family. GreB subfamily.

In terms of biological role, necessary for efficient RNA polymerase transcription elongation past template-encoded arresting sites. The arresting sites in DNA have the property of trapping a certain fraction of elongating RNA polymerases that pass through, resulting in locked ternary complexes. Cleavage of the nascent transcript by cleavage factors such as GreA or GreB allows the resumption of elongation from the new 3'terminus. GreB releases sequences of up to 9 nucleotides in length. This chain is Transcription elongation factor GreB, found in Salmonella typhimurium (strain LT2 / SGSC1412 / ATCC 700720).